Reading from the N-terminus, the 324-residue chain is Probable tRNA pseudouridine synthase B (324 aa).

Asp72 serves as the catalytic Nucleophile. The 76-residue stretch at 239–314 (LPRVVILDSA…LVIETRKVFM (76 aa)) folds into the PUA domain.

This sequence belongs to the pseudouridine synthase TruB family. Type 2 subfamily.

It catalyses the reaction uridine(55) in tRNA = pseudouridine(55) in tRNA. Functionally, could be responsible for synthesis of pseudouridine from uracil-55 in the psi GC loop of transfer RNAs. The polypeptide is Probable tRNA pseudouridine synthase B (Methanothermobacter thermautotrophicus (strain ATCC 29096 / DSM 1053 / JCM 10044 / NBRC 100330 / Delta H) (Methanobacterium thermoautotrophicum)).